The primary structure comprises 1010 residues: Eukaryotic translation initiation factor 4E transporter (1010 aa).

The YXXXXLphi motif signature appears at 10 to 16 (YSKVDLL). Disordered regions lie at residues 154-182 (GSNS…RKGS), 196-277 (PDHD…RLVE), 289-320 (YDSK…SKRG), 354-391 (NEER…SNDS), and 921-960 (QSNP…ERIS). The span at 201-211 (CMSSSPTFSTS) shows a compositional bias: polar residues. Basic and acidic residues predominate over residues 227-247 (DNWDYKNEKTVEASIENEKET). Positions 248–263 (SPNGSGSTSSLNQHNQ) are enriched in polar residues. 2 stretches are compositionally biased toward basic and acidic residues: residues 354-364 (NEERSVTEDKN) and 372-384 (KNLD…DEAS). Residues 934-953 (SDSSDSGNVIKANSLTSPSY) are compositionally biased toward polar residues.

This sequence belongs to the 4E-T/EIF4E-T family. Interacts (via YXXXXLphi motif) with eIF4E1. Interacts with DDX6/me31B. Expressed in all larval and adult organs and tissues, with highest levels in the ovary.

Its subcellular location is the cytoplasm. It is found in the P-body. The protein localises to the nucleus. Functionally, eIF4E1-binding protein that regulates translation and stability of mRNAs in processing bodies (P-bodies). Probably plays a role in P-bodies to coordinate the storage of translationally inactive mRNAs in the cytoplasm and prevent their degradation. Acts as a binding platform for multiple RNA-binding proteins. Required for the formation of P-bodies. This Drosophila melanogaster (Fruit fly) protein is Eukaryotic translation initiation factor 4E transporter.